The chain runs to 169 residues: Transmembrane protein 89 (169 aa).

The first 22 residues, 1-22, serve as a signal peptide directing secretion; it reads MLYTLLLVPSLFLLVMPVPSQG. Topologically, residues 23–75 are extracellular; sequence WSRPLWYQVGLDLQPWGCQPNSPDIWGCQPNSLDSCKNSLGCPGYWLGLGGNR. The helical transmembrane segment at 76-96 threads the bilayer; the sequence is IYPVAGVTITTTMLLVVSRVI. The Cytoplasmic segment spans residues 97 to 169; the sequence is VHRWRAKVAK…QIKGSPPQSG (73 aa).

The protein localises to the membrane. This is Transmembrane protein 89 (Tmem89) from Mus musculus (Mouse).